We begin with the raw amino-acid sequence, 545 residues long: Chaperonin GroEL 3 (545 aa).

ATP-binding positions include 29–32, 86–90, glycine 413, 479–481, and aspartate 495; these read TLGP, DGTTT, and DAV. Residues 526-545 form a disordered region; the sequence is DKQAKAPAGVGPGPGEGFDY. A compositionally biased stretch (gly residues) spans 535–545; sequence VGPGPGEGFDY.

The protein belongs to the chaperonin (HSP60) family. Forms a cylinder of 14 subunits composed of two heptameric rings stacked back-to-back. Interacts with the co-chaperonin GroES.

Its subcellular location is the cytoplasm. It catalyses the reaction ATP + H2O + a folded polypeptide = ADP + phosphate + an unfolded polypeptide.. Functionally, together with its co-chaperonin GroES, plays an essential role in assisting protein folding. The GroEL-GroES system forms a nano-cage that allows encapsulation of the non-native substrate proteins and provides a physical environment optimized to promote and accelerate protein folding. In Trichormus variabilis (strain ATCC 29413 / PCC 7937) (Anabaena variabilis), this protein is Chaperonin GroEL 3.